The sequence spans 389 residues: S-adenosylmethionine synthase (389 aa).

H17 is an ATP binding site. Mg(2+) is bound at residue D19. E45 contacts K(+). The L-methionine site is built by E58 and Q101. The tract at residues 101-111 (QSPDISQGVTE) is flexible loop. ATP is bound by residues 168 to 170 (DSK), 234 to 235 (RF), D243, 249 to 250 (RK), A266, and K270. D243 provides a ligand contact to L-methionine. Position 274 (K274) interacts with L-methionine.

It belongs to the AdoMet synthase family. In terms of assembly, homotetramer; dimer of dimers. The cofactor is Mg(2+). K(+) serves as cofactor.

The protein localises to the cytoplasm. It catalyses the reaction L-methionine + ATP + H2O = S-adenosyl-L-methionine + phosphate + diphosphate. Its pathway is amino-acid biosynthesis; S-adenosyl-L-methionine biosynthesis; S-adenosyl-L-methionine from L-methionine: step 1/1. Functionally, catalyzes the formation of S-adenosylmethionine (AdoMet) from methionine and ATP. The overall synthetic reaction is composed of two sequential steps, AdoMet formation and the subsequent tripolyphosphate hydrolysis which occurs prior to release of AdoMet from the enzyme. This Geobacter metallireducens (strain ATCC 53774 / DSM 7210 / GS-15) protein is S-adenosylmethionine synthase.